Here is a 147-residue protein sequence, read N- to C-terminus: MVHFTAEEKATIMSLWGKVNVEEAGGEALGRLLVVYPWTQRFFDNFGNLSSASAIMGNPKVKAHGKKVLTSFGDAVKNMDNLKGAFAKLSELHCDKLHVDPENFRLLGNVMVIILATHFGKEFTPDVQAAWQKLVSGVATALAHKYH.

Positions 3–147 (HFTAEEKATI…VATALAHKYH (145 aa)) constitute a Globin domain. Phosphoserine occurs at positions 14 and 51. Histidine 64 and histidine 93 together coordinate heme b.

Belongs to the globin family. As to quaternary structure, heterotetramer of two alpha chains and two epsilon chains in early embryonic hemoglobin Gower-2; two zeta chains and two epsilon chains in early embryonic hemoglobin Gower-1. As to expression, red blood cells.

Functionally, the epsilon chain is a beta-type chain of early mammalian embryonic hemoglobin. The polypeptide is Hemoglobin subunit epsilon (HBE1) (Daubentonia madagascariensis (Aye-aye)).